The sequence spans 439 residues: Protein translocase subunit SecY (439 aa).

10 helical membrane-spanning segments follow: residues 28–48 (ILIT…PVPG), 73–93 (IFSG…LPYI), 127–147 (LTRY…AVWV), 156–176 (PLFT…VMWI), 179–199 (LITE…NIVA), 220–240 (VGGI…IVFV), 276–296 (GVMP…LANF), 318–338 (IYAL…SSLI), 375–395 (LTIL…AVEG), and 401–421 (TFQG…IDTA).

It belongs to the SecY/SEC61-alpha family. In terms of assembly, component of the Sec protein translocase complex. Heterotrimer consisting of SecY, SecE and SecG subunits. The heterotrimers can form oligomers, although 1 heterotrimer is thought to be able to translocate proteins. Interacts with the ribosome. Interacts with SecDF, and other proteins may be involved. Interacts with SecA.

It localises to the cell inner membrane. Its subcellular location is the cellular thylakoid membrane. Its function is as follows. The central subunit of the protein translocation channel SecYEG. Consists of two halves formed by TMs 1-5 and 6-10. These two domains form a lateral gate at the front which open onto the bilayer between TMs 2 and 7, and are clamped together by SecE at the back. The channel is closed by both a pore ring composed of hydrophobic SecY resides and a short helix (helix 2A) on the extracellular side of the membrane which forms a plug. The plug probably moves laterally to allow the channel to open. The ring and the pore may move independently. In Synechococcus elongatus (strain ATCC 33912 / PCC 7942 / FACHB-805) (Anacystis nidulans R2), this protein is Protein translocase subunit SecY.